The chain runs to 73 residues: Mucroporin-like peptide (73 aa).

The N-terminal stretch at 1 to 22 (MKVKCLLAVFLIVLIAAEHCQA) is a signal peptide. Position 38 is a lysine amide (lysine 38). Positions 44 to 73 (ELGTQFQPRQKNFMRREVDLERLFAEMPDY) are excised as a propeptide.

Belongs to the non-disulfide-bridged peptide (NDBP) superfamily. Short antimicrobial peptide (group 4) family. In terms of tissue distribution, expressed by the venom gland.

The protein localises to the secreted. Its subcellular location is the target cell membrane. In terms of biological role, cationic host defense peptide that have antibacterial activity by breaking membranes. Is more effective on Gram-positive than on Gram-negative bacteria. The polypeptide is Mucroporin-like peptide (Lychas mucronatus (Chinese swimming scorpion)).